Reading from the N-terminus, the 218-residue chain is Thiamine-phosphate synthase (218 aa).

Residues 43 to 47 and Asn75 each bind 4-amino-2-methyl-5-(diphosphooxymethyl)pyrimidine; that span reads QLRMK. Mg(2+) contacts are provided by Asp76 and Asp95. A 4-amino-2-methyl-5-(diphosphooxymethyl)pyrimidine-binding site is contributed by Thr114. 140-142 contributes to the 2-[(2R,5Z)-2-carboxy-4-methylthiazol-5(2H)-ylidene]ethyl phosphate binding site; sequence TST. Residue Lys143 coordinates 4-amino-2-methyl-5-(diphosphooxymethyl)pyrimidine. Residues Gly171 and 191–192 contribute to the 2-[(2R,5Z)-2-carboxy-4-methylthiazol-5(2H)-ylidene]ethyl phosphate site; that span reads VS.

This sequence belongs to the thiamine-phosphate synthase family. Mg(2+) is required as a cofactor.

The catalysed reaction is 2-[(2R,5Z)-2-carboxy-4-methylthiazol-5(2H)-ylidene]ethyl phosphate + 4-amino-2-methyl-5-(diphosphooxymethyl)pyrimidine + 2 H(+) = thiamine phosphate + CO2 + diphosphate. The enzyme catalyses 2-(2-carboxy-4-methylthiazol-5-yl)ethyl phosphate + 4-amino-2-methyl-5-(diphosphooxymethyl)pyrimidine + 2 H(+) = thiamine phosphate + CO2 + diphosphate. It carries out the reaction 4-methyl-5-(2-phosphooxyethyl)-thiazole + 4-amino-2-methyl-5-(diphosphooxymethyl)pyrimidine + H(+) = thiamine phosphate + diphosphate. It participates in cofactor biosynthesis; thiamine diphosphate biosynthesis; thiamine phosphate from 4-amino-2-methyl-5-diphosphomethylpyrimidine and 4-methyl-5-(2-phosphoethyl)-thiazole: step 1/1. Condenses 4-methyl-5-(beta-hydroxyethyl)thiazole monophosphate (THZ-P) and 2-methyl-4-amino-5-hydroxymethyl pyrimidine pyrophosphate (HMP-PP) to form thiamine monophosphate (TMP). The protein is Thiamine-phosphate synthase of Myxococcus xanthus (strain DK1622).